A 381-amino-acid chain; its full sequence is 3-isopropylmalate dehydrogenase (381 aa).

The substrate site is built by arginine 104, arginine 114, arginine 142, and aspartate 232. Aspartate 232, aspartate 256, and aspartate 260 together coordinate Mg(2+). 290–302 (GSAPDIAGQDKAN) serves as a coordination point for NAD(+).

The protein belongs to the isocitrate and isopropylmalate dehydrogenases family. LeuB type 1 subfamily. As to quaternary structure, homodimer. Mg(2+) serves as cofactor. It depends on Mn(2+) as a cofactor.

The protein resides in the cytoplasm. The enzyme catalyses (2R,3S)-3-isopropylmalate + NAD(+) = 4-methyl-2-oxopentanoate + CO2 + NADH. The protein operates within amino-acid biosynthesis; L-leucine biosynthesis; L-leucine from 3-methyl-2-oxobutanoate: step 3/4. Functionally, catalyzes the oxidation of 3-carboxy-2-hydroxy-4-methylpentanoate (3-isopropylmalate) to 3-carboxy-4-methyl-2-oxopentanoate. The product decarboxylates to 4-methyl-2 oxopentanoate. The protein is 3-isopropylmalate dehydrogenase of Synechococcus sp. (strain JA-3-3Ab) (Cyanobacteria bacterium Yellowstone A-Prime).